Here is a 368-residue protein sequence, read N- to C-terminus: Abasic site processing protein YMR114C (368 aa).

Cysteine 2 serves as the catalytic Nucleophile. Cysteine 2 bears the Thiazolidine linkage to a ring-opened DNA abasic site mark. The interval 25–48 is disordered; that stretch reads VNTPKDASSNSQHPHDEEDTKDQP. The segment covering 37–46 has biased composition (basic and acidic residues); sequence HPHDEEDTKD. Glutamate 132 is an active-site residue. The interval 270–368 is disordered; sequence LENDNEQGID…DSRGKKKIKK (99 aa). 3 stretches are compositionally biased toward basic and acidic residues: residues 281-296, 304-313, and 326-349; these read RGVK…DVFN, NSYDGLKKNE, and IGDR…EKRN. Serine 338 carries the phosphoserine modification.

The protein belongs to the SOS response-associated peptidase family.

The protein resides in the chromosome. Formation and reversal of DNA-protein cross-link depends on DNA context. Catalyzes formation of the thiazolidine linkage in presence of abasic sites in single-stranded DNA. Mediates the reversal of the thiazolidine cross-link in presence of double stranded DNA. Sensor of abasic sites in single-stranded DNA (ssDNA) required to preserve genome integrity by promoting error-free repair of abasic sites. Recognizes and binds abasic sites in ssDNA at replication forks and chemically modifies the lesion by forming a covalent cross-link with DNA: forms a stable thiazolidine linkage between a ring-opened abasic site and the alpha-amino and sulfhydryl substituents of its N-terminal catalytic cysteine residue. The DNA-protein cross-link is then reversed: able to catalyze the reversal of the thiazolidine cross-link and cycle between a cross-link and a non-cross-linked state depending on DNA context: mediates self-reversal of the thiazolidine cross-link in double stranded DNA. Acts as a protease: mediates autocatalytic processing of its N-terminal methionine in order to expose the catalytic cysteine. This Saccharomyces cerevisiae (strain ATCC 204508 / S288c) (Baker's yeast) protein is Abasic site processing protein YMR114C.